The primary structure comprises 413 residues: Lipoyl synthase, mitochondrial (413 aa).

The N-terminal 33 residues, 1 to 33 (MAAATNRFRALYSSSRVATPQAGSASYLSYRGY), are a transit peptide targeting the mitochondrion. Residues C133, C138, C144, C164, C168, C171, and S379 each coordinate [4Fe-4S] cluster. Residues 147–368 (GGDKAAATAT…RQRALDMGFL (222 aa)) form the Radical SAM core domain.

The protein belongs to the radical SAM superfamily. Lipoyl synthase family. The cofactor is [4Fe-4S] cluster.

It localises to the mitochondrion. The enzyme catalyses [[Fe-S] cluster scaffold protein carrying a second [4Fe-4S](2+) cluster] + N(6)-octanoyl-L-lysyl-[protein] + 2 oxidized [2Fe-2S]-[ferredoxin] + 2 S-adenosyl-L-methionine + 4 H(+) = [[Fe-S] cluster scaffold protein] + N(6)-[(R)-dihydrolipoyl]-L-lysyl-[protein] + 4 Fe(3+) + 2 hydrogen sulfide + 2 5'-deoxyadenosine + 2 L-methionine + 2 reduced [2Fe-2S]-[ferredoxin]. Its pathway is protein modification; protein lipoylation via endogenous pathway; protein N(6)-(lipoyl)lysine from octanoyl-[acyl-carrier-protein]: step 2/2. Functionally, catalyzes the radical-mediated insertion of two sulfur atoms into the C-6 and C-8 positions of the octanoyl moiety bound to the lipoyl domains of lipoate-dependent enzymes, thereby converting the octanoylated domains into lipoylated derivatives. In Emericella nidulans (strain FGSC A4 / ATCC 38163 / CBS 112.46 / NRRL 194 / M139) (Aspergillus nidulans), this protein is Lipoyl synthase, mitochondrial.